An 85-amino-acid chain; its full sequence is Small ribosomal subunit protein bS20 (85 aa).

Disordered regions lie at residues 1-25 (MANI…ASIK) and 62-85 (ARKG…QVNA).

Belongs to the bacterial ribosomal protein bS20 family.

Functionally, binds directly to 16S ribosomal RNA. This is Small ribosomal subunit protein bS20 from Bacillus cereus (strain G9842).